The primary structure comprises 438 residues: Aspartate--tRNA(Asp/Asn) ligase (438 aa).

Glutamate 176 contributes to the L-aspartate binding site. An aspartate region spans residues 198-201 (QLYK). Residue arginine 220 participates in L-aspartate binding. ATP is bound by residues 220 to 222 (RAE), 228 to 230 (RHL), and glutamate 361. 2 residues coordinate Mg(2+): glutamate 361 and serine 364. Residues serine 364 and arginine 368 each coordinate L-aspartate. 409 to 412 (GADR) lines the ATP pocket.

It belongs to the class-II aminoacyl-tRNA synthetase family. Type 2 subfamily. As to quaternary structure, homodimer. It depends on Mg(2+) as a cofactor.

It is found in the cytoplasm. The enzyme catalyses tRNA(Asx) + L-aspartate + ATP = L-aspartyl-tRNA(Asx) + AMP + diphosphate. Aspartyl-tRNA synthetase with relaxed tRNA specificity since it is able to aspartylate not only its cognate tRNA(Asp) but also tRNA(Asn). Reaction proceeds in two steps: L-aspartate is first activated by ATP to form Asp-AMP and then transferred to the acceptor end of tRNA(Asp/Asn). This Methanococcus vannielii (strain ATCC 35089 / DSM 1224 / JCM 13029 / OCM 148 / SB) protein is Aspartate--tRNA(Asp/Asn) ligase.